The following is a 1689-amino-acid chain: DNA-directed RNA polymerase I subunit rpa1 (1689 aa).

Zn(2+) contacts are provided by C63, C66, C73, and H76. A phosphoserine mark is found at S159 and S161. Basic and acidic residues predominate over residues 269 to 280 (VLRDTSKKHHED). Residues 269 to 295 (VLRDTSKKHHEDEGYDGDSDSSNESEV) form a disordered region. Positions 281 to 295 (EGYDGDSDSSNESEV) are enriched in acidic residues. D643, D645, and D647 together coordinate Mg(2+). The bridging helix stretch occupies residues 1005 to 1017 (PQEYYFHCMAGRE). Residues 1346-1440 (RKSGGKDDTV…EEDEGFKSDE (95 aa)) form a disordered region. A phosphoserine mark is found at S1438 and S1441.

It belongs to the RNA polymerase beta' chain family. As to quaternary structure, component of the RNA polymerase I (Pol I) complex consisting of at least 13 subunits.

It is found in the nucleus. It localises to the nucleolus. The catalysed reaction is RNA(n) + a ribonucleoside 5'-triphosphate = RNA(n+1) + diphosphate. DNA-dependent RNA polymerase catalyzes the transcription of DNA into RNA using the four ribonucleoside triphosphates as substrates. Largest and catalytic core component of RNA polymerase I which synthesizes ribosomal RNA precursors. Forms the polymerase active center together with the second largest subunit. A single stranded DNA template strand of the promoter is positioned within the central active site cleft of Pol I. A bridging helix emanates from RPA1 and crosses the cleft near the catalytic site and is thought to promote translocation of Pol I by acting as a ratchet that moves the RNA-DNA hybrid through the active site by switching from straight to bent conformations at each step of nucleotide addition. The polypeptide is DNA-directed RNA polymerase I subunit rpa1 (rpa1) (Schizosaccharomyces pombe (strain 972 / ATCC 24843) (Fission yeast)).